The chain runs to 264 residues: Sirohydrochlorin cobaltochelatase (264 aa).

6 residues coordinate Co-sirohydrochlorin: glycine 45, isoleucine 84, isoleucine 85, aspartate 88, glutamate 89, and lysine 92. The Proton acceptor role is filled by histidine 145. Co(2+) is bound by residues histidine 145 and glutamate 175. Co-sirohydrochlorin contacts are provided by leucine 202, valine 203, and histidine 207. Residue histidine 207 participates in Co(2+) binding.

It belongs to the CbiK family. Homotrimer.

The enzyme catalyses Co-sirohydrochlorin + 2 H(+) = sirohydrochlorin + Co(2+). It carries out the reaction Co-precorrin-2 + 3 H(+) = precorrin-2 + Co(2+). It participates in cofactor biosynthesis; adenosylcobalamin biosynthesis; cob(II)yrinate a,c-diamide from sirohydrochlorin (anaerobic route): step 1/10. In terms of biological role, cobalt chelatase responsible for the insertion of cobalt during anaerobic cobalamin biosynthesis. Can catalyze the insertion of Co(2+) into either sirohydrochlorin or precorrin-2. It is not clear which is the natural substrate in Salmonella. This is Sirohydrochlorin cobaltochelatase from Salmonella typhimurium (strain LT2 / SGSC1412 / ATCC 700720).